We begin with the raw amino-acid sequence, 188 residues long: Elongation factor P (188 aa).

The protein belongs to the elongation factor P family.

It is found in the cytoplasm. Its pathway is protein biosynthesis; polypeptide chain elongation. Functionally, involved in peptide bond synthesis. Stimulates efficient translation and peptide-bond synthesis on native or reconstituted 70S ribosomes in vitro. Probably functions indirectly by altering the affinity of the ribosome for aminoacyl-tRNA, thus increasing their reactivity as acceptors for peptidyl transferase. This is Elongation factor P from Rickettsia typhi (strain ATCC VR-144 / Wilmington).